We begin with the raw amino-acid sequence, 1155 residues long: DNA-directed RNA polymerase subunit beta (1155 aa).

Belongs to the RNA polymerase beta chain family. As to quaternary structure, the RNAP catalytic core consists of 2 alpha, 1 beta, 1 beta' and 1 omega subunit. When a sigma factor is associated with the core the holoenzyme is formed, which can initiate transcription.

The catalysed reaction is RNA(n) + a ribonucleoside 5'-triphosphate = RNA(n+1) + diphosphate. DNA-dependent RNA polymerase catalyzes the transcription of DNA into RNA using the four ribonucleoside triphosphates as substrates. This chain is DNA-directed RNA polymerase subunit beta, found in Borrelia duttonii (strain Ly).